The following is a 94-amino-acid chain: Large ribosomal subunit protein uL23 (94 aa).

The protein belongs to the universal ribosomal protein uL23 family. Part of the 50S ribosomal subunit. Contacts protein L29, and trigger factor when it is bound to the ribosome.

Functionally, one of the early assembly proteins it binds 23S rRNA. One of the proteins that surrounds the polypeptide exit tunnel on the outside of the ribosome. Forms the main docking site for trigger factor binding to the ribosome. This chain is Large ribosomal subunit protein uL23, found in Treponema denticola (strain ATCC 35405 / DSM 14222 / CIP 103919 / JCM 8153 / KCTC 15104).